The sequence spans 170 residues: ATP synthase F(1) complex subunit delta, mitochondrial (170 aa).

Residues 1–33 (MIRSIIKSSNNLLKSNVAINSNKRFFATEASAT) constitute a mitochondrion transit peptide.

The protein belongs to the ATPase epsilon chain family. As to quaternary structure, component of the ATP synthase complex composed at least of ATP5F1A/subunit alpha, ATP5F1B/subunit beta, ATP5MC1/subunit c (homooctomer), MT-ATP6/subunit a, MT-ATP8/subunit 8, ATP5ME/subunit e, ATP5MF/subunit f, ATP5MG/subunit g, ATP5MK/subunit k, ATP5MJ/subunit j, ATP5F1C/subunit gamma, ATP5F1D/subunit delta, ATP5F1E/subunit epsilon, ATP5PF/subunit F6, ATP5PB/subunit b, ATP5PD/subunit d, ATP5PO/subunit OSCP. ATP synthase complex consists of a soluble F(1) head domain (subunits alpha(3) and beta(3)) - the catalytic core - and a membrane F(0) domain - the membrane proton channel (subunits c, a, 8, e, f, g, k and j). These two domains are linked by a central stalk (subunits gamma, delta, and epsilon) rotating inside the F1 region and a stationary peripheral stalk (subunits F6, b, d, and OSCP).

It localises to the mitochondrion. The protein localises to the mitochondrion inner membrane. Functionally, subunit delta, of the mitochondrial membrane ATP synthase complex (F(1)F(0) ATP synthase or Complex V) that produces ATP from ADP in the presence of a proton gradient across the membrane which is generated by electron transport complexes of the respiratory chain. ATP synthase complex consist of a soluble F(1) head domain - the catalytic core - and a membrane F(1) domain - the membrane proton channel. These two domains are linked by a central stalk rotating inside the F(1) region and a stationary peripheral stalk. During catalysis, ATP synthesis in the catalytic domain of F(1) is coupled via a rotary mechanism of the central stalk subunits to proton translocation. In vivo, can only synthesize ATP although its ATP hydrolase activity can be activated artificially in vitro. With the central stalk subunit gamma, is essential for the biogenesis of F(1) catalytic part of the ATP synthase complex namely in the formation of F1 assembly intermediate. This Dictyostelium discoideum (Social amoeba) protein is ATP synthase F(1) complex subunit delta, mitochondrial.